We begin with the raw amino-acid sequence, 321 residues long: Cilia- and flagella-associated protein 161 (321 aa).

Residues 275-321 (LSTMLDLPKPPAEDTRALEQEREQVSDPGARSTPDARGCVPQCTLPM) are disordered. Residues 285–299 (PAEDTRALEQEREQV) show a composition bias toward basic and acidic residues.

Microtubule inner protein component of sperm flagellar doublet microtubules. As to expression, expressed in trachea multiciliated cells.

The protein localises to the cytoplasm. It localises to the cytoskeleton. The protein resides in the cilium axoneme. Its subcellular location is the flagellum axoneme. Microtubule inner protein (MIP) part of the dynein-decorated doublet microtubules (DMTs) in cilia axoneme, which is required for motile cilia beating. The protein is Cilia- and flagella-associated protein 161 of Bos taurus (Bovine).